A 163-amino-acid polypeptide reads, in one-letter code: UPF0262 protein RPD_4278 (163 aa).

The protein belongs to the UPF0262 family.

In Rhodopseudomonas palustris (strain BisB5), this protein is UPF0262 protein RPD_4278.